The following is a 1316-amino-acid chain: MLDVNFFDELRIGLATAEDIRQWSYGEVKKPETINYRTLKPEKDGLFCEKIFGPTRDWECYCGKYKRVRFKGIICERCGVEVTRAKVRRERMGHIELAAPVTHIWYFKGVPSRLGYLLDLAPKDLEKIIYFAAYVITSVDEEMRHNELSTLEAEMAVERKAVEDQRDGELEARAQKLEADLAELEAEGAKADARRKVRDGGEREMRQIRDRAQRELDRLEDIWSTFTKLAPKQLIVDENLYRELVDRYGEYFTGAMGAESIQKLIENFDIDAEAESLRDVIRNGKGQKKLRALKRLKVVAAFQQSGNSPMGMVLDAVPVIPPELRPMVQLDGGRFATSDLNDLYRRVINRNNRLKRLIDLGAPEIIVNNEKRMLQESVDALFDNGRRGRPVTGPGNRPLKSLSDLLKGKQGRFRQNLLGKRVDYSGRSVIVVGPQLKLHQCGLPKLMALELFKPFVMKRLVDLNHAQNIKSAKRMVERQRPQVWDVLEEVIAEHPVLLNRAPTLHRLGIQAFEPMLVEGKAIQLHPLVCEAFNADFDGDQMAVHLPLSAEAQAEARILMLSSNNILSPASGRPLAMPRLDMVTGLYYLTTEVPEDTGEYQPASGDHPETGVYSSPAEAIMAADRGVLSVRAKIKVRLTQLRPPVEIEAELFGHSGWQPGDAWMAETTLGRVMFNELLPLGYPFVNKQMHKKVQAAIINDLAERYPMIVVAQTVDKLKDAGFYWATRSGVTVSMADVLVPPRKKEILDHYEERADKVEKQFQRGALNHDERNEALVEIWKEATDEVGQALREHYPDDNPIITIVDSGATGNFTQTRTLAGMKGLVTNPKGEFIPRPVKSSFREGLTVLEYFINTHGARKGLADTALRTADSGYLTRRLVDVSQDVIVREHDCQTERGIVVELAERAPDGTLIRDPYIETSAYARTLGTDAVDEAGNVIVERGQDLGDPEIDALLAAGITQVKVRSVLTCATSTGVCATCYGRSMATGKLVDIGEAVGIVAAQSIGEPGTQLTMRTFHQGGVGEDITGGLPRVQELFEARVPRGKAPIADVTGRVRLEDGERFYKITIVPDDGGEEVVYDKISKRQRLRVFKHEDGSERVLSDGDHVEVGQQLMEGSADPHEVLRVQGPREVQIHLVREVQEVYRAQGVSIHDKHIEVIVRQMLRRVTIIDSGSTEFLPGSLIDRAEFEAENRRVVAEGGEPAAGRPVLMGITKASLATDSWLSAASFQETTRVLTDAAINCRSDKLNGLKENVIIGKLIPAGTGINRYRNIAVQPTEEARAAAYTIPSYEDQYYSPDFGAATGAAVPLDDYGYSDYR.

Residues Cys60, Cys62, Cys75, and Cys78 each contribute to the Zn(2+) site. Mg(2+) contacts are provided by Asp535, Asp537, and Asp539. 4 residues coordinate Zn(2+): Cys891, Cys968, Cys975, and Cys978.

This sequence belongs to the RNA polymerase beta' chain family. As to quaternary structure, the RNAP catalytic core consists of 2 alpha, 1 beta, 1 beta' and 1 omega subunit. When a sigma factor is associated with the core the holoenzyme is formed, which can initiate transcription. Mg(2+) serves as cofactor. Requires Zn(2+) as cofactor.

It carries out the reaction RNA(n) + a ribonucleoside 5'-triphosphate = RNA(n+1) + diphosphate. Its function is as follows. DNA-dependent RNA polymerase catalyzes the transcription of DNA into RNA using the four ribonucleoside triphosphates as substrates. This chain is DNA-directed RNA polymerase subunit beta', found in Mycobacterium tuberculosis (strain CDC 1551 / Oshkosh).